The sequence spans 199 residues: dTTP/UTP pyrophosphatase (199 aa).

Aspartate 76 acts as the Proton acceptor in catalysis.

The protein belongs to the Maf family. YhdE subfamily. A divalent metal cation is required as a cofactor.

The protein localises to the cytoplasm. The catalysed reaction is dTTP + H2O = dTMP + diphosphate + H(+). The enzyme catalyses UTP + H2O = UMP + diphosphate + H(+). In terms of biological role, nucleoside triphosphate pyrophosphatase that hydrolyzes dTTP and UTP. May have a dual role in cell division arrest and in preventing the incorporation of modified nucleotides into cellular nucleic acids. The chain is dTTP/UTP pyrophosphatase from Chlorobaculum parvum (strain DSM 263 / NCIMB 8327) (Chlorobium vibrioforme subsp. thiosulfatophilum).